Consider the following 177-residue polypeptide: Parathyroid hormone-related protein (177 aa).

Residues 1–24 (MLRRLVQQWGVAVFLLSYSVPSCG) form the signal peptide. Positions 25–34 (RSVEELGRRL) are excised as a propeptide. The segment at 57 to 68 (RFFLHHLIAEIH) is important for receptor binding. A disordered region spans residues 74 to 177 (ATSEVSPNSK…TSLELNLRRH (104 aa)). The segment covering 76–90 (SEVSPNSKPAPNTKN) has biased composition (polar residues). A Nuclear localization signal motif is present at residues 108-129 (TNKVETYKEQPLKTPGKKKKGK). Basic and acidic residues predominate over residues 109 to 118 (NKVETYKEQP). Over residues 122 to 132 (PGKKKKGKPGK) the composition is skewed to basic residues.

Belongs to the parathyroid hormone family. PTHrP interacts with PTH1R (via N-terminal extracellular domain). Post-translationally, there are several secretory forms, including osteostatin, arising from endoproteolytic cleavage of the initial translation product. Each of these secretory forms is believed to have one or more of its own receptors that mediates the normal paracrine, autocrine and endocrine actions.

The protein localises to the secreted. It is found in the cytoplasm. It localises to the nucleus. In terms of biological role, neuroendocrine peptide which is a critical regulator of cellular and organ growth, development, migration, differentiation and survival and of epithelial calcium ion transport. Acts by binding to its receptor, PTH1R, activating G protein-coupled receptor signaling. Regulates endochondral bone development and epithelial-mesenchymal interactions during the formation of the mammary glands and teeth. Required for skeletal homeostasis. Promotes mammary mesenchyme differentiation and bud outgrowth by modulating mesenchymal cell responsiveness to BMPs. Up-regulates BMPR1A expression in the mammary mesenchyme and this increases the sensitivity of these cells to BMPs and allows them to respond to BMP4 in a paracrine and/or autocrine fashion. BMP4 signaling in the mesenchyme, in turn, triggers epithelial outgrowth and augments MSX2 expression, which causes the mammary mesenchyme to inhibit hair follicle formation within the nipple sheath. Functionally, potent inhibitor of osteoclastic bone resorption. The protein is Parathyroid hormone-related protein (PTHLH) of Canis lupus familiaris (Dog).